Reading from the N-terminus, the 536-residue chain is MFS-type efflux pump MFS1 (536 aa).

Helical transmembrane passes span 30–50 (VTGLKLAVIVTGLCLSVLLVA), 80–100 (YLLTICAFQLIFGKIYTFFPV), and 102–122 (WVFLIAITIFEIGSAICGAAP). The N-linked (GlcNAc...) asparagine glycan is linked to Asn123. Transmembrane regions (helical) follow at residues 133–153 (VAGIGSAGIFSGALIIIAYSI), 163–183 (GAIGGMYGIASVAGPLMGGAF), and 191–211 (WCFYINLPIGAVTILSILIFL). Asn221 carries N-linked (GlcNAc...) asparagine glycosylation. The next 8 helical transmembrane spans lie at 234–254 (IGTAFFMPSIICLLLALQWGG), 264–284 (IIALFVVFAVLISGFIYFQIR), 306–326 (FFLFTIGSAFFIMVYYLPIWF), 342–362 (IPMVLSLVVLSIASGITVTAI), 366–386 (APLYYVSTVLTSIGAGLLTTF), 400–420 (IIFGAGVGTGLQLSIIAAQAV), 426–446 (VAVGTVIMMFCQTLGGALFVS), and 503–523 (TWYVATALAALSVIGSVGMEW).

This sequence belongs to the major facilitator superfamily. TCR/Tet family.

It is found in the cell membrane. In terms of biological role, MFS-type efflux pump involved in the modulation susceptibility to azoles, including fluconazole, itraconazole, miconazole and voriconazole. Also confers increased resistance chloramphenicol and thiamphenicol, suggesting that it acts as a pleiotropic drug transporter with a broad substrate spectrum. Finally, increases the tolerance to cycloheximide when expressed in S.cerevisiae, but not in dermatophyte species. The polypeptide is MFS-type efflux pump MFS1 (Arthroderma benhamiae (strain ATCC MYA-4681 / CBS 112371) (Trichophyton mentagrophytes)).